We begin with the raw amino-acid sequence, 153 residues long: Putative trans-acting regulator pXO2-62/BXB0076/GBAA_pXO2_0076 (153 aa).

The protein belongs to the AtxA/AcpA family.

The sequence is that of Putative trans-acting regulator pXO2-62/BXB0076/GBAA_pXO2_0076 from Bacillus anthracis.